A 310-amino-acid chain; its full sequence is tRNA uridine(34) hydroxylase (310 aa).

Residues serine 124–serine 218 enclose the Rhodanese domain. Cysteine 178 functions as the Cysteine persulfide intermediate in the catalytic mechanism.

Belongs to the TrhO family.

The enzyme catalyses uridine(34) in tRNA + AH2 + O2 = 5-hydroxyuridine(34) in tRNA + A + H2O. Catalyzes oxygen-dependent 5-hydroxyuridine (ho5U) modification at position 34 in tRNAs. The sequence is that of tRNA uridine(34) hydroxylase from Pseudomonas putida (strain ATCC 47054 / DSM 6125 / CFBP 8728 / NCIMB 11950 / KT2440).